The chain runs to 431 residues: Putative malic acid transport protein (431 aa).

10 helical membrane-spanning segments follow: residues 30–50 (FTWA…VTSL), 62–82 (GKII…CITF), 101–121 (VLFM…LYPY), 136–156 (ILYW…FYSL), 167–187 (IIPA…IASA), 201–221 (VVAG…VYAV), 239–259 (GMFI…DLAF), 284–304 (FMAL…FVSV), 318–338 (VSWF…QELG), and 346–366 (VCIV…ILIL). Residues 402 to 424 (EEEKDEAERSKRKAEESDGKTTR) are compositionally biased toward basic and acidic residues. Residues 402–431 (EEEKDEAERSKRKAEESDGKTTRELTSGGL) form a disordered region.

The protein belongs to the tellurite-resistance/dicarboxylate transporter (TDT) family.

It localises to the membrane. The polypeptide is Putative malic acid transport protein (Schizosaccharomyces pombe (strain 972 / ATCC 24843) (Fission yeast)).